A 117-amino-acid chain; its full sequence is MSSTLSAYRNALRATRIAFRQDLPILQAARMQLKQGIRDNSNLQTQPEIEEAVQKLNDVAKFLIQNIVQGEKQQDGKYFLNFHEKTELGDNETIKQGRKEMGSLAGKKGNSIKSCKD.

The transit peptide at 1 to 10 (MSSTLSAYRN) directs the protein to the mitochondrion.

It belongs to the complex I LYR family. MZM1 subfamily. In terms of assembly, interacts with RIP1.

It localises to the mitochondrion matrix. Functionally, assembly factor required for Rieske Fe-S protein RIP1 incorporation into the cytochrome b-c1 (CIII) complex. Functions as a chaperone, binding to this subunit within the mitochondrial matrix and stabilizing it prior to its translocation and insertion into the late CIII dimeric intermediate within the mitochondrial inner membrane. Modulates the mitochondrial matrix zinc pool. In Candida dubliniensis (strain CD36 / ATCC MYA-646 / CBS 7987 / NCPF 3949 / NRRL Y-17841) (Yeast), this protein is Mitochondrial zinc maintenance protein 1, mitochondrial (MZM1).